The sequence spans 151 residues: D-aminoacyl-tRNA deacylase (151 aa).

The Gly-cisPro motif, important for rejection of L-amino acids motif lies at 142–143; it reads GP.

It belongs to the DTD family. As to quaternary structure, homodimer.

It localises to the cytoplasm. It carries out the reaction glycyl-tRNA(Ala) + H2O = tRNA(Ala) + glycine + H(+). The catalysed reaction is a D-aminoacyl-tRNA + H2O = a tRNA + a D-alpha-amino acid + H(+). Functionally, an aminoacyl-tRNA editing enzyme that deacylates mischarged D-aminoacyl-tRNAs. Also deacylates mischarged glycyl-tRNA(Ala), protecting cells against glycine mischarging by AlaRS. Acts via tRNA-based rather than protein-based catalysis; rejects L-amino acids rather than detecting D-amino acids in the active site. By recycling D-aminoacyl-tRNA to D-amino acids and free tRNA molecules, this enzyme counteracts the toxicity associated with the formation of D-aminoacyl-tRNA entities in vivo and helps enforce protein L-homochirality. This Psychrobacter cryohalolentis (strain ATCC BAA-1226 / DSM 17306 / VKM B-2378 / K5) protein is D-aminoacyl-tRNA deacylase.